The following is a 258-amino-acid chain: Glutamate racemase (258 aa).

Substrate contacts are provided by residues 12-13 (DS) and 44-45 (YG). Residue C75 is the Proton donor/acceptor of the active site. Residue 76-77 (NT) coordinates substrate. The active-site Proton donor/acceptor is the C186. 187–188 (TH) contacts substrate.

The protein belongs to the aspartate/glutamate racemases family.

The catalysed reaction is L-glutamate = D-glutamate. It participates in cell wall biogenesis; peptidoglycan biosynthesis. Its function is as follows. Provides the (R)-glutamate required for cell wall biosynthesis. The chain is Glutamate racemase from Clostridium botulinum (strain Alaska E43 / Type E3).